The sequence spans 190 residues: NDVDVVMDASSKPIFPGGEYYIMPAIWGPPGGGVRLAKTRNSDCPVTVLQDYGEVIFGQPVKFTLPGRGSGLIITNTPVEEFIKKPECASSSKWSVFVDDEIEKACVGIGGHEDHPGEQVFSGTFTIQKSRTPYNSYKLVFCESDSSTCSDIGRYDNNEGGRRLILTHHNPFQVVFMDASTFDGTIRSDG.

2 disulfides stabilise this stretch: C44/C88 and C142/C149.

Belongs to the protease inhibitor I3 (leguminous Kunitz-type inhibitor) family. As to quaternary structure, forms active dimers on storage in aqueous solution, possibly through formation of an intermolecular disulfide bond. The N-terminal Asn is removed in about 50% of both the CLSI-II and CLSI-III chains.

Its subcellular location is the secreted. Its function is as follows. Inhibits subtilisin-type microbial serine proteases incuding proteinase K, subtilisin BPN', subtilisin Carlsberg and subtilisin E in a non-stoichiometric manner. Weakly inhibits A.oryzae protease and some metalloproteases including pronase E. Does not inhibit trypsin, chymotrypsin, S.griseus alkaline protease or A.lyticus lysyl endopeptidase. CLSI-II has a wider inhibitory specificity than CLSI-III. The sequence is that of Subtilisin inhibitor CLSI-II from Canavalia lineata (Beach bean).